Here is a 519-residue protein sequence, read N- to C-terminus: Bifunctional dihydrofolate reductase-thymidylate synthase 1 (519 aa).

Ala2 carries the post-translational modification N-acetylalanine. The region spanning Thr21 to Arg198 is the DHFR domain. Val25 contributes to the substrate binding site. NADP(+)-binding positions include Ala27 and Gly33–Lys39. Substrate is bound at residue Asp47. Residues Arg71 to Thr73 and Leu92 to Ser95 contribute to the NADP(+) site. Substrate is bound at residue Ile134. Gly135–Glu142 serves as a coordination point for NADP(+). Thr155 contributes to the substrate binding site. The interval Ser201–His234 is hinge. Positions Glu235–Val519 are thymidylate synthase. A dUMP-binding site is contributed by Arg256. Residue Cys401 is part of the active site. DUMP contacts are provided by residues His402, Gln420–Asp424, Asn432, and His462–Tyr464.

It in the N-terminal section; belongs to the dihydrofolate reductase family. The protein in the C-terminal section; belongs to the thymidylate synthase family. Heterodimer or homodimer.

The catalysed reaction is (6S)-5,6,7,8-tetrahydrofolate + NADP(+) = 7,8-dihydrofolate + NADPH + H(+). The enzyme catalyses dUMP + (6R)-5,10-methylene-5,6,7,8-tetrahydrofolate = 7,8-dihydrofolate + dTMP. Its pathway is cofactor biosynthesis; tetrahydrofolate biosynthesis; 5,6,7,8-tetrahydrofolate from 7,8-dihydrofolate: step 1/1. In terms of biological role, bifunctional enzyme. Involved in de novo dTMP biosynthesis. Key enzyme in folate metabolism. Can play two different roles depending on the source of dihydrofolate: de novo synthesis of tetrahydrofolate or recycling of the dihydrofolate released as one of the end products of the TS catalyzed reaction. Catalyzes an essential reaction for de novo glycine and purine synthesis, DNA precursor synthesis, and for the conversion of dUMP to dTMP. The chain is Bifunctional dihydrofolate reductase-thymidylate synthase 1 (THY-1) from Arabidopsis thaliana (Mouse-ear cress).